We begin with the raw amino-acid sequence, 318 residues long: Acetyl-coenzyme A carboxylase carboxyl transferase subunit alpha (318 aa).

Residues 38–292 (KLEKRLAKLE…NKTITKSLHA (255 aa)) form the CoA carboxyltransferase C-terminal domain.

Belongs to the AccA family. As to quaternary structure, acetyl-CoA carboxylase is a heterohexamer composed of biotin carboxyl carrier protein (AccB), biotin carboxylase (AccC) and two subunits each of ACCase subunit alpha (AccA) and ACCase subunit beta (AccD).

The protein resides in the cytoplasm. The catalysed reaction is N(6)-carboxybiotinyl-L-lysyl-[protein] + acetyl-CoA = N(6)-biotinyl-L-lysyl-[protein] + malonyl-CoA. It functions in the pathway lipid metabolism; malonyl-CoA biosynthesis; malonyl-CoA from acetyl-CoA: step 1/1. Its function is as follows. Component of the acetyl coenzyme A carboxylase (ACC) complex. First, biotin carboxylase catalyzes the carboxylation of biotin on its carrier protein (BCCP) and then the CO(2) group is transferred by the carboxyltransferase to acetyl-CoA to form malonyl-CoA. This Listeria innocua serovar 6a (strain ATCC BAA-680 / CLIP 11262) protein is Acetyl-coenzyme A carboxylase carboxyl transferase subunit alpha.